Reading from the N-terminus, the 445-residue chain is Chromosome partition protein MukF (445 aa).

The segment at 213–241 is leucine-zipper; that stretch reads LSETSSTLRELQDTLQAASDELQTQILDI.

Belongs to the MukF family. Interacts, and probably forms a ternary complex, with MukE and MukB via its C-terminal region. The complex formation is stimulated by calcium or magnesium. It is required for an interaction between MukE and MukB.

The protein resides in the cytoplasm. The protein localises to the nucleoid. In terms of biological role, involved in chromosome condensation, segregation and cell cycle progression. May participate in facilitating chromosome segregation by condensation DNA from both sides of a centrally located replisome during cell division. Not required for mini-F plasmid partitioning. Probably acts via its interaction with MukB and MukE. Overexpression results in anucleate cells. It has a calcium binding activity. This is Chromosome partition protein MukF from Vibrio campbellii (strain ATCC BAA-1116).